We begin with the raw amino-acid sequence, 156 residues long: Small ribosomal subunit protein uS7 (156 aa).

It belongs to the universal ribosomal protein uS7 family. In terms of assembly, part of the 30S ribosomal subunit. Contacts proteins S9 and S11.

Functionally, one of the primary rRNA binding proteins, it binds directly to 16S rRNA where it nucleates assembly of the head domain of the 30S subunit. Is located at the subunit interface close to the decoding center, probably blocks exit of the E-site tRNA. This Syntrophomonas wolfei subsp. wolfei (strain DSM 2245B / Goettingen) protein is Small ribosomal subunit protein uS7.